We begin with the raw amino-acid sequence, 1070 residues long: DNA-directed RNA polymerase subunit beta (1070 aa).

This sequence belongs to the RNA polymerase beta chain family. In plastids the minimal PEP RNA polymerase catalytic core is composed of four subunits: alpha, beta, beta', and beta''. When a (nuclear-encoded) sigma factor is associated with the core the holoenzyme is formed, which can initiate transcription.

The protein resides in the plastid. It is found in the chloroplast. It carries out the reaction RNA(n) + a ribonucleoside 5'-triphosphate = RNA(n+1) + diphosphate. Functionally, DNA-dependent RNA polymerase catalyzes the transcription of DNA into RNA using the four ribonucleoside triphosphates as substrates. This chain is DNA-directed RNA polymerase subunit beta, found in Angiopteris evecta (Mule's foot fern).